Consider the following 554-residue polypeptide: Perforin-1 (554 aa).

The N-terminal stretch at 1–20 (MAAYLFLLGLFLLLPRPVPA) is a signal peptide. Disulfide bonds link Cys22/Cys75, Cys30/Cys72, and Cys101/Cys175. Residues 26–374 (TRSECKQNHK…HYVMSRARWR (349 aa)) enclose the MACPF domain. Residues 128–148 (WRAGLDVNPKPEANVHVSVAG) form a beta stranded membrane-spanning segment. N-linked (GlcNAc...) asparagine glycosylation occurs at Asn204. 4 disulfides stabilise this stretch: Cys241-Cys407, Cys376-Cys392, Cys380-Cys394, and Cys396-Cys406. A beta stranded transmembrane segment spans residues 256 to 278 (CLSVEAQVSIGAQASVSSEYKAC). One can recognise an EGF-like domain in the interval 375–407 (DCNRPCRAGQHKSSRDSCQCVCQDSNVTNQDCC). A C2 domain is found at 395 to 513 (VCQDSNVTNQ…FHEVNCPLNH (119 aa)). N-linked (GlcNAc...) asparagine glycosylation occurs at Asn400. Positions 428, 429, 432, 435, 454, 483, 484, 485, 488, 489, 490, and 491 each coordinate Ca(2+). Cystine bridges form between Cys496–Cys509 and Cys524–Cys533. The N-linked (GlcNAc...) asparagine glycan is linked to Asn548.

Belongs to the complement C6/C7/C8/C9 family. As to quaternary structure, monomer, as soluble protein. Homooligomer; homooligomerizes to form a pore-forming ring. Requires Ca(2+) as cofactor. N-glycosylated. Detected in large granular lymphocytes and lymphokine-activated killer cells.

It is found in the cytolytic granule. Its subcellular location is the secreted. The protein resides in the cell membrane. The protein localises to the endosome lumen. Pore-forming protein that plays a key role in granzyme-mediated programmed cell death, and in defense against virus-infected or neoplastic cells. Can insert into the membrane of target cells in its calcium-bound form, oligomerize and form large pores. Promotes cytolysis and apoptosis of target cells by mediating the passage and uptake of cytotoxic granzymes. Facilitates the delivery of cationic cargo protein, while anionic or neural proteins are not delivered efficiently. Perforin pores allow the release of mature caspase-7 (CASP7) into the extracellular milieu. In Rattus norvegicus (Rat), this protein is Perforin-1 (Prf1).